The chain runs to 5142 residues: Protein piccolo (5142 aa).

The segment covering 1-21 (MGNEASLEGEGLPEGLAAAAA) has biased composition (low complexity). 2 disordered regions span residues 1 to 154 (MGNE…SMMP) and 177 to 583 (DLIS…PSQG). 3 stretches are compositionally biased toward basic and acidic residues: residues 114–125 (RTTDTFRSEQKL), 136–150 (KESK…EHKS), and 188–202 (ETTK…EQGK). Positions 232-244 (QDGTPKSISSQQP) are enriched in polar residues. Composition is skewed to pro residues over residues 298 to 317 (LPSP…PPAQ) and 352 to 371 (PVQP…PAKP). A compositionally biased stretch (polar residues) spans 376–385 (TGSEKPSSEQ). The segment at 397–555 (VGKTPAQQPG…PAKPSAQQST (159 aa)) is 10 X 10 AA tandem approximate repeats of P-A-K-P-Q-P-Q-Q-P-X. Over residues 467–493 (TKPPSQLPGPAKPPPQQPGPAKPPPQQ) the composition is skewed to pro residues. The segment covering 494–506 (PGSAKPPSQQPGS) has biased composition (low complexity). Positions 507-522 (TKPPPQQPGPAKPSPQ) are enriched in pro residues. Positions 523–554 (QPGSTKPPSQQPGSAKPSAQQPSPAKPSAQQS) are enriched in low complexity. The segment at 589–613 (CPLCNTTELLLHVPEKANFNTCTEC) adopts a C4-type zinc-finger fold. Disordered regions lie at residues 650-929 (LAPV…TVTG) and 945-1058 (LIST…PEST). Over residues 673–683 (SKSSPQPQQTS) the composition is skewed to low complexity. 2 stretches are compositionally biased toward basic and acidic residues: residues 684-702 (PKKD…EPKK) and 743-755 (EQDK…DKPK). The segment covering 765–774 (DLVSSSSATT) has biased composition (polar residues). The segment covering 841–857 (KGQKQVDPVQKKEEPKK) has biased composition (basic and acidic residues). The span at 873–882 (KGSPTPPGPR) shows a compositional bias: pro residues. A compositionally biased stretch (polar residues) spans 889–927 (VPTPQQSPKPQEQSRRFSLNLGSITDAPKSQPTTPQETV). Residues Ser-906 and Ser-918 each carry the phosphoserine modification. Thr-922 bears the Phosphothreonine mark. A compositionally biased stretch (low complexity) spans 949–969 (AGQPGPHSQSGPGAPMKQAPA). Composition is skewed to basic and acidic residues over residues 996 to 1012 (VKKE…EPKA) and 1019 to 1034 (KRTE…KDSK). The C4-type zinc finger occupies 1059 to 1082 (CPLCKTELNIGSKDPPNFNTCTEC). Disordered stretches follow at residues 1120–1163 (GDIR…QEQE), 1183–1386 (EKIP…TDEK), 1391–1410 (GLKK…SDLA), and 1423–1868 (QAST…SDPE). Over residues 1126 to 1139 (PPAPSGPKASPMPV) the composition is skewed to pro residues. Composition is skewed to basic and acidic residues over residues 1193-1265 (QKQE…HDLL), 1307-1318 (PKEDDKTTKTIK), and 1330-1347 (DQVE…DKSD). The segment covering 1348-1358 (TSSSQQPKSPQ) has biased composition (low complexity). Residues Ser-1356, Ser-1366, Ser-1367, Ser-1396, Ser-1398, Ser-1401, Ser-1402, and Ser-1405 each carry the phosphoserine modification. Residues 1359-1374 (GLSDTGYSSDGISSSL) show a composition bias toward polar residues. A compositionally biased stretch (low complexity) spans 1398–1407 (SQESSPSSPS). Basic and acidic residues-rich tracts occupy residues 1428-1451 (ADEK…DQEK) and 1469-1510 (KESQ…REPY). Ser-1516, Ser-1517, Ser-1519, Ser-1522, Ser-1546, Ser-1549, Ser-1570, and Ser-1572 each carry phosphoserine. Over residues 1564–1576 (SADEDASGSEDDE) the composition is skewed to acidic residues. A Phosphothreonine modification is found at Thr-1617. Phosphoserine occurs at positions 1618, 1628, and 1640. Positions 1631–1640 (DEDDEAFDES) are enriched in acidic residues. The span at 1641–1652 (PELKYRETKSQE) shows a compositional bias: basic and acidic residues. Residues 1671 to 1689 (ELNSTIADKYSAESSQKKT) are compositionally biased toward polar residues. Residues 1693–1703 (FDEEPELEMES) are compositionally biased toward acidic residues. Position 1703 is a phosphoserine (Ser-1703). Thr-1705 is modified (phosphothreonine). Phosphoserine is present on residues Ser-1707 and Ser-1712. Over residues 1715–1732 (EGSSSLHASSFTPGTSPT) the composition is skewed to polar residues. The segment covering 1772–1785 (DSSEEEELREEEEL) has biased composition (acidic residues). 2 positions are modified to phosphoserine: Ser-1773 and Ser-1774. Positions 1786 to 1799 (LKEQEKQREIEQQQ) are enriched in basic and acidic residues. Phosphothreonine is present on Thr-1825. A Phosphoserine modification is found at Ser-1831. Basic and acidic residues predominate over residues 1840 to 1855 (EELRQAAEMEELHRSS). Phosphoserine occurs at positions 1860, 1865, 1873, and 1894. Disordered regions lie at residues 2169–2192 (PSES…SSVC), 2365–2438 (ETFG…PTIL), and 2504–2536 (EPSK…PTGL). Composition is skewed to low complexity over residues 2174–2192 (TSVP…SSVC) and 2374–2387 (SQLP…SSLP). Pro residues-rich tracts occupy residues 2404-2433 (QPPP…PTSP) and 2506-2517 (SKPPIAPKPVIP). Ser-2562 is modified (phosphoserine). Thr-3069 bears the Phosphothreonine mark. Disordered stretches follow at residues 3407–3508 (EKQP…DKTK) and 3558–3626 (KTYK…LYSP). Positions 3432-3441 (DDPRSFKKIV) are enriched in basic and acidic residues. Ser-3443 bears the Phosphoserine mark. A phosphothreonine mark is found at Thr-3447 and Thr-3474. The segment covering 3474–3483 (TDDEDQDEWD) has biased composition (acidic residues). A compositionally biased stretch (polar residues) spans 3574–3585 (DTQSPQYLSATS). Ser-3577, Ser-3585, Ser-3615, Ser-3619, Ser-3625, Ser-3628, Ser-3631, Ser-3652, Ser-3678, Ser-3680, and Ser-3686 each carry phosphoserine. Disordered regions lie at residues 3652-3746 (SPQK…MGTV) and 3833-3908 (YMSD…QQSH). Polar residues-rich tracts occupy residues 3701–3716 (EGYT…SSGA) and 3733–3745 (STGT…TMGT). Phosphoserine is present on Ser-3835. Over residues 3845–3857 (TRIESQHGIERPR) the composition is skewed to basic and acidic residues. Residues 3859–3908 (APQTEFSQFIPPQTQTESQLVPPTSPYTQYQYSSPALPTQAPTSYTQQSH) are compositionally biased toward polar residues. Phosphoserine is present on residues Ser-4088 and Ser-4204. Residues 4278–4301 (EADKPYSSGSRSRPSSRPSSVYGL) form a disordered region. A compositionally biased stretch (low complexity) spans 4282 to 4301 (PYSSGSRSRPSSRPSSVYGL). A phosphoserine mark is found at Ser-4358, Ser-4362, Ser-4365, Ser-4394, and Ser-4430. Residues 4389-4411 (RDQFGSSHSLPEVQQHMREESRT) are disordered. A PDZ domain is found at 4496–4590 (RIKITRDSKD…EAEICVRLDL (95 aa)). Disordered regions lie at residues 4597–4618 (ENSQ…KSPG) and 4645–4690 (EKGS…TKVV). Positions 4598 to 4615 (NSQHLELHEPPKAVDKAK) are enriched in basic and acidic residues. Low complexity predominate over residues 4652-4673 (SGPTSAGSSSVPSPGQPGSPSV). Residue Ser-4664 is modified to Phosphoserine. The 130-residue stretch at 4694 to 4823 (ITGEIQLQIN…SHLDNTPRWY (130 aa)) folds into the C2 1 domain. Positions 4723 and 4729 each coordinate Ca(2+). The residue at position 4778 (Ser-4778) is a Phosphoserine. Ca(2+) contacts are provided by Asp-4793, Asp-4795, Ser-4798, and Asp-4801. 2 disordered regions span residues 4830–4907 (ESID…VTQT) and 4930–4986 (PTKP…QNGQ). Composition is skewed to low complexity over residues 4838–4853 (HSSQ…SVIK) and 4877–4887 (SSPGSSKSSSE). Polar residues predominate over residues 4895–4907 (PSRSQSKTSVTQT). The span at 4941–4965 (SSVSTGSSGSSFGSGYSVDSEGSSS) shows a compositional bias: low complexity. The 126-residue stretch at 5007–5132 (VMGEIKIALK…DLRKRIVNWH (126 aa)) folds into the C2 2 domain.

As to quaternary structure, interacts with BSN, ERC2/CAST1, RIMS1 and UNC13A. Interacts (via C-terminus) with TRIO (via N-terminus). Interacts with CTBP1. Interacts with SIAH1; this interaction negatively regulates SIAH1 E3 ligase activity. Directly interacts with GIT1 and GIT2. Requires Ca(2+) as cofactor. As to expression, moderately expressed in the developing cerebral cortex.

The protein resides in the presynaptic active zone. Scaffold protein of the presynaptic cytomatrix at the active zone (CAZ) which is the place in the synapse where neurotransmitter is released. After synthesis, participates in the formation of Golgi-derived membranous organelles termed Piccolo-Bassoon transport vesicles (PTVs) that are transported along axons to sites of nascent synaptic contacts. At the presynaptic active zone, regulates the spatial organization of synaptic vesicle cluster, the protein complexes that execute membrane fusion and compensatory endocytosis. Organizes as well the readily releasable pool of synaptic vesicles and safeguards a fraction of them to be not immediately available for action potential-induced release. Also functions in processes other than assembly such as the regulation of specific presynaptic protein ubiquitination by interacting with SIAH1 or the regulation of presynaptic autophagy. Also mediates synapse to nucleus communication leading to reconfiguration of gene expression by associating with the transcriptional corepressor CTBP1 and by subsequently reducing the size of its pool available for nuclear import. The protein is Protein piccolo of Homo sapiens (Human).